A 1406-amino-acid chain; its full sequence is DNA-directed RNA polymerase subunit beta' (1406 aa).

Zn(2+) contacts are provided by cysteine 70, cysteine 72, cysteine 85, and cysteine 88. Positions 460, 462, and 464 each coordinate Mg(2+). Cysteine 814, cysteine 888, cysteine 895, and cysteine 898 together coordinate Zn(2+).

It belongs to the RNA polymerase beta' chain family. In terms of assembly, the RNAP catalytic core consists of 2 alpha, 1 beta, 1 beta' and 1 omega subunit. When a sigma factor is associated with the core the holoenzyme is formed, which can initiate transcription. Requires Mg(2+) as cofactor. Zn(2+) serves as cofactor.

The catalysed reaction is RNA(n) + a ribonucleoside 5'-triphosphate = RNA(n+1) + diphosphate. In terms of biological role, DNA-dependent RNA polymerase catalyzes the transcription of DNA into RNA using the four ribonucleoside triphosphates as substrates. This Colwellia psychrerythraea (strain 34H / ATCC BAA-681) (Vibrio psychroerythus) protein is DNA-directed RNA polymerase subunit beta'.